The chain runs to 664 residues: DNA mismatch repair protein MutL (664 aa).

The protein belongs to the DNA mismatch repair MutL/HexB family.

This protein is involved in the repair of mismatches in DNA. It is required for dam-dependent methyl-directed DNA mismatch repair. May act as a 'molecular matchmaker', a protein that promotes the formation of a stable complex between two or more DNA-binding proteins in an ATP-dependent manner without itself being part of a final effector complex. In Clostridium beijerinckii (strain ATCC 51743 / NCIMB 8052) (Clostridium acetobutylicum), this protein is DNA mismatch repair protein MutL.